A 200-amino-acid chain; its full sequence is Ependymin-related protein 1 (200 aa).

The N-terminal stretch at 1–17 (MILQAALFLAGLTVVSG) is a signal peptide. 3 N-linked (GlcNAc...) asparagine glycosylation sites follow: Asn-36, Asn-124, and Asn-136.

It belongs to the ependymin family. As to expression, component of the acid-soluble and acid-insoluble organic matrix of prismatic shell layers (at protein level). Expressed discontinuously in the anterior zone of the outer fold of the mantle where its expression correlates with shell pigmentation.

It localises to the secreted. The sequence is that of Ependymin-related protein 1 from Haliotis asinina (Donkey's ear abalone).